An 82-amino-acid polypeptide reads, in one-letter code: Protein ImpC (82 aa).

This sequence belongs to the DinI family.

The imp operon is involved in UV protection and mutation, however the ImpC protein is not essential for these functions. The polypeptide is Protein ImpC (impC) (Salmonella typhimurium).